The following is a 466-amino-acid chain: Ribulose bisphosphate carboxylase large chain (466 aa).

Lys5 bears the N6,N6,N6-trimethyllysine mark. Asn114 and Thr164 together coordinate substrate. The active-site Proton acceptor is the Lys166. Lys168 is a substrate binding site. Lys192, Asp194, and Glu195 together coordinate Mg(2+). An N6-carboxylysine modification is found at Lys192. The Proton acceptor role is filled by His285. Substrate is bound by residues Arg286, His318, and Ser370.

It belongs to the RuBisCO large chain family. Type I subfamily. Heterohexadecamer of 8 large chains and 8 small chains; disulfide-linked. The disulfide link is formed within the large subunit homodimers. Requires Mg(2+) as cofactor. Post-translationally, the disulfide bond which can form in the large chain dimeric partners within the hexadecamer appears to be associated with oxidative stress and protein turnover.

Its subcellular location is the plastid. The protein localises to the chloroplast. The enzyme catalyses 2 (2R)-3-phosphoglycerate + 2 H(+) = D-ribulose 1,5-bisphosphate + CO2 + H2O. The catalysed reaction is D-ribulose 1,5-bisphosphate + O2 = 2-phosphoglycolate + (2R)-3-phosphoglycerate + 2 H(+). In terms of biological role, ruBisCO catalyzes two reactions: the carboxylation of D-ribulose 1,5-bisphosphate, the primary event in carbon dioxide fixation, as well as the oxidative fragmentation of the pentose substrate in the photorespiration process. Both reactions occur simultaneously and in competition at the same active site. The sequence is that of Ribulose bisphosphate carboxylase large chain from Adenium obesum (Desert rose).